Here is a 219-residue protein sequence, read N- to C-terminus: ATP-dependent dethiobiotin synthetase BioD (219 aa).

Gly12–Ile17 is a binding site for ATP. Thr16 provides a ligand contact to Mg(2+). Residue Lys32 is part of the active site. Residues Asp43 and Glu96 to Gly99 contribute to the ATP site. The Mg(2+) site is built by Asp43 and Glu96.

Belongs to the dethiobiotin synthetase family. Homodimer. Mg(2+) serves as cofactor.

It localises to the cytoplasm. The catalysed reaction is (7R,8S)-7,8-diammoniononanoate + CO2 + ATP = (4R,5S)-dethiobiotin + ADP + phosphate + 3 H(+). The protein operates within cofactor biosynthesis; biotin biosynthesis; biotin from 7,8-diaminononanoate: step 1/2. Catalyzes a mechanistically unusual reaction, the ATP-dependent insertion of CO2 between the N7 and N8 nitrogen atoms of 7,8-diaminopelargonic acid (DAPA, also called 7,8-diammoniononanoate) to form a ureido ring. This Chlamydia pneumoniae (Chlamydophila pneumoniae) protein is ATP-dependent dethiobiotin synthetase BioD.